The primary structure comprises 628 residues: tRNA (guanine(37)-N(1))-methyltransferase (628 aa).

S-adenosyl-L-methionine-binding positions include His265, Asp303–Leu304, Asp342–Gly343, and Asn445.

The protein belongs to the class I-like SAM-binding methyltransferase superfamily. TRM5/TYW2 family. In terms of assembly, monomer.

The protein resides in the mitochondrion matrix. Its subcellular location is the nucleus. It localises to the cytoplasm. It carries out the reaction guanosine(37) in tRNA + S-adenosyl-L-methionine = N(1)-methylguanosine(37) in tRNA + S-adenosyl-L-homocysteine + H(+). Its function is as follows. Specifically methylates the N1 position of guanosine-37 in various cytoplasmic and mitochondrial tRNAs. Methylation is not dependent on the nature of the nucleoside 5' of the target nucleoside. This is the first step in the biosynthesis of wybutosine (yW), a modified base adjacent to the anticodon of tRNAs and required for accurate decoding. The sequence is that of tRNA (guanine(37)-N(1))-methyltransferase from Mycosarcoma maydis (Corn smut fungus).